Reading from the N-terminus, the 348-residue chain is Aspartate carbamoyltransferase catalytic subunit (348 aa).

The carbamoyl phosphate site is built by R59 and T60. L-aspartate is bound at residue K87. Carbamoyl phosphate-binding residues include R109, H142, and Q145. L-aspartate is bound by residues R182 and R253. Carbamoyl phosphate is bound by residues G294 and P295.

The protein belongs to the aspartate/ornithine carbamoyltransferase superfamily. ATCase family. Heterododecamer (2C3:3R2) of six catalytic PyrB chains organized as two trimers (C3), and six regulatory PyrI chains organized as three dimers (R2).

The catalysed reaction is carbamoyl phosphate + L-aspartate = N-carbamoyl-L-aspartate + phosphate + H(+). The protein operates within pyrimidine metabolism; UMP biosynthesis via de novo pathway; (S)-dihydroorotate from bicarbonate: step 2/3. In terms of biological role, catalyzes the condensation of carbamoyl phosphate and aspartate to form carbamoyl aspartate and inorganic phosphate, the committed step in the de novo pyrimidine nucleotide biosynthesis pathway. The sequence is that of Aspartate carbamoyltransferase catalytic subunit from Prochlorococcus marinus (strain MIT 9313).